We begin with the raw amino-acid sequence, 248 residues long: Anamorsin homolog (248 aa).

The N-terminal SAM-like domain stretch occupies residues 4-129 (FKGLQKSLYI…ETGSSARLSF (126 aa)). Residues 130–161 (AKKNANAVNVWKISGDDEELIDEEELLDEEDK) form a linker region. The [2Fe-2S] cluster site is built by Cys172, Cys181, Cys184, and Cys186. Positions 172-186 (CSTTGKRKACKNCSC) are fe-S binding site A. Positions 209, 212, 220, and 223 each coordinate [4Fe-4S] cluster. 2 consecutive short sequence motifs (cx2C motif) follow at residues 209–212 (CGNC) and 220–223 (CSTC). Positions 209 to 223 (CGNCYLGDAFRCSTC) are fe-S binding site B.

This sequence belongs to the anamorsin family. Monomer. The cofactor is [2Fe-2S] cluster. [4Fe-4S] cluster serves as cofactor.

The protein resides in the cytoplasm. It localises to the mitochondrion intermembrane space. Its function is as follows. Component of the cytosolic iron-sulfur (Fe-S) protein assembly (CIA) machinery. Required for the maturation of extramitochondrial Fe-S proteins. Part of an electron transfer chain functioning in an early step of cytosolic Fe-S biogenesis, facilitating the de novo assembly of a [4Fe-4S] cluster on the cytosolic Fe-S scaffold complex. Electrons are transferred from NADPH via a FAD- and FMN-containing diflavin oxidoreductase. Together with the diflavin oxidoreductase, also required for the assembly of the diferric tyrosyl radical cofactor of ribonucleotide reductase (RNR), probably by providing electrons for reduction during radical cofactor maturation in the catalytic small subunit. In Drosophila simulans (Fruit fly), this protein is Anamorsin homolog.